Here is a 130-residue protein sequence, read N- to C-terminus: MSMQDPIADMLTRIRNGQAANHVSVKMPSAKLKVAIAKLLQDEGFITGYAVADEAKPELEITLKYFQGKPVVETIQRVSRPGLRIYKGKDELPKVMGGLGIAIVSTSQGLMTDRAARQNGTGGEVICYVA.

The protein belongs to the universal ribosomal protein uS8 family. As to quaternary structure, part of the 30S ribosomal subunit. Contacts proteins S5 and S12.

Its function is as follows. One of the primary rRNA binding proteins, it binds directly to 16S rRNA central domain where it helps coordinate assembly of the platform of the 30S subunit. This is Small ribosomal subunit protein uS8 from Shewanella denitrificans (strain OS217 / ATCC BAA-1090 / DSM 15013).